Reading from the N-terminus, the 183-residue chain is UPF0398 protein BLi02355/BL05236 (183 aa).

The protein belongs to the UPF0398 family.

This Bacillus licheniformis (strain ATCC 14580 / DSM 13 / JCM 2505 / CCUG 7422 / NBRC 12200 / NCIMB 9375 / NCTC 10341 / NRRL NRS-1264 / Gibson 46) protein is UPF0398 protein BLi02355/BL05236.